A 485-amino-acid chain; its full sequence is Glutathione gamma-glutamylcysteinyltransferase 1 (485 aa).

The region spanning 1-221 (MAMASLYRRS…GFMLISRPHR (221 aa)) is the Peptidase C83 domain. Active-site residues include Cys-56, His-162, and Asp-180.

It belongs to the phytochelatin synthase family. Expressed in roots and shoots.

The enzyme catalyses [Glu(-Cys)](n)-Gly + glutathione + H(+) = [Glu(-Cys)](n+1)-Gly + glycine. Its activity is regulated as follows. Requires cadmium for activity. Also activated in vitro or in heterologous system by Ag(+), Hg(+), Zn(2+), Cu(2+), Fe(2+) or Fe(3+) ions, but not by Co(2+) or Ni(2+) ions. Its function is as follows. Involved in the synthesis of phytochelatins (PC) and homophytochelatins (hPC), the heavy-metal-binding peptides of plants. Also involved in glutathione-conjugates degradation. The protein is Glutathione gamma-glutamylcysteinyltransferase 1 (PCS1) of Arabidopsis thaliana (Mouse-ear cress).